The sequence spans 667 residues: High affinity sulfate transporter 1 (667 aa).

Positions 16–38 (ETRSNSSSHRHGGGGGGDDTTSL) are disordered. 11 consecutive transmembrane segments (helical) span residues 106 to 126 (GDFI…LAYA), 131 to 151 (LDPW…AFMG), 156 to 176 (IAIG…SNEI), 185 to 205 (LRLA…LGVC), 208 to 228 (GFLI…GAAI), 269 to 289 (WETI…KYIA), 296 to 316 (FWVS…FVYI), 350 to 370 (GAGV…AIAI), 425 to 445 (VSNI…TPLF), 452 to 472 (VLAS…AMVL), and 486 to 506 (GAFF…AVAI). Residues 537-660 (QYPKAAQIPG…LTVADAVATY (124 aa)) enclose the STAS domain.

The protein belongs to the SLC26A/SulP transporter (TC 2.A.53) family.

It localises to the membrane. High-affinity H(+)/sulfate cotransporter that mediates the uptake of sulfate by plant roots from low concentrations of sulfate in the soil solution. In Stylosanthes hamata (Caribbean stylo), this protein is High affinity sulfate transporter 1 (ST1).